The sequence spans 336 residues: MSPPVATESMYKPTTIGTEAHDQALAAMKSNQAAPAKPVFKPEPAVNLEPIKFAPIKEHQVQRAMVRRYFQDMEERAISDVIIVGAGSAGLSCAYALGKARPDLKITILESNVAPGGGCWLGGQLMSAMVCRKPADKFLDEVGVPYEDEGNFVVVKHAALFTSTVLSKVLAMPNVKMFNATACEDLIIKPCPINPGVQRVAGCVTNWTLVSLNHDHQSCMDPSTITAPLVCSFAGHDGPFGAFCVKRIASAGLSEGLGDMRPLDMERAEDHIANKTREIVPGLIVGGMELSEFDGSARMGPTFGAMLLSGKRAAEVALQSLGRVKVEEGEVVGSAK.

Residues alanine 89, 110–111 (ES), glycine 118, and cysteine 183 contribute to the substrate site. Cysteine 219 carries the post-translational modification 2,3-didehydroalanine (Cys). Substrate contacts are provided by residues aspartate 221, histidine 236, methionine 288, and 298–300 (RMG).

The protein belongs to the THI4 family. As to quaternary structure, homooctamer. Fe cation is required as a cofactor. During the catalytic reaction, a sulfide is transferred from Cys-219 to a reaction intermediate, generating a dehydroalanine residue.

Its subcellular location is the cytoplasm. The protein resides in the nucleus. The enzyme catalyses [ADP-thiazole synthase]-L-cysteine + glycine + NAD(+) = [ADP-thiazole synthase]-dehydroalanine + ADP-5-ethyl-4-methylthiazole-2-carboxylate + nicotinamide + 3 H2O + 2 H(+). Its function is as follows. Involved in biosynthesis of the thiamine precursor thiazole. Catalyzes the conversion of NAD and glycine to adenosine diphosphate 5-(2-hydroxyethyl)-4-methylthiazole-2-carboxylic acid (ADT), an adenylated thiazole intermediate. The reaction includes an iron-dependent sulfide transfer from a conserved cysteine residue of the protein to a thiazole intermediate. The enzyme can only undergo a single turnover, which suggests it is a suicide enzyme. May have additional roles in adaptation to various stress conditions and in DNA damage tolerance. This Puccinia graminis f. sp. tritici (strain CRL 75-36-700-3 / race SCCL) (Black stem rust fungus) protein is Thiamine thiazole synthase.